The sequence spans 34 residues: Cytochrome b6-f complex subunit 7 (34 aa).

The helical transmembrane segment at 9–27 threads the bilayer; that stretch reads AILSFGLIFVGWGLGALLL.

The protein belongs to the PetM family. The 4 large subunits of the cytochrome b6-f complex are cytochrome b6, subunit IV (17 kDa polypeptide, PetD), cytochrome f and the Rieske protein, while the 4 small subunits are PetG, PetL, PetM and PetN. The complex functions as a dimer.

The protein resides in the cellular thylakoid membrane. Its function is as follows. Component of the cytochrome b6-f complex, which mediates electron transfer between photosystem II (PSII) and photosystem I (PSI), cyclic electron flow around PSI, and state transitions. The sequence is that of Cytochrome b6-f complex subunit 7 from Nostoc punctiforme (strain ATCC 29133 / PCC 73102).